The following is a 402-amino-acid chain: UPF0261 protein BPP1817 (402 aa).

Belongs to the UPF0261 family.

This chain is UPF0261 protein BPP1817, found in Bordetella parapertussis (strain 12822 / ATCC BAA-587 / NCTC 13253).